The sequence spans 264 residues: DNA-directed RNA polymerase subunit Rpo3 (264 aa).

The [3Fe-4S] cluster site is built by C203, C206, and C209.

Belongs to the archaeal Rpo3/eukaryotic RPB3 RNA polymerase subunit family. As to quaternary structure, part of the RNA polymerase complex. It depends on [3Fe-4S] cluster as a cofactor.

The protein localises to the cytoplasm. It carries out the reaction RNA(n) + a ribonucleoside 5'-triphosphate = RNA(n+1) + diphosphate. Functionally, DNA-dependent RNA polymerase (RNAP) catalyzes the transcription of DNA into RNA using the four ribonucleoside triphosphates as substrates. The chain is DNA-directed RNA polymerase subunit Rpo3 from Methanothermobacter thermautotrophicus (strain ATCC 29096 / DSM 1053 / JCM 10044 / NBRC 100330 / Delta H) (Methanobacterium thermoautotrophicum).